Consider the following 270-residue polypeptide: NADPH-dependent 7-cyano-7-deazaguanine reductase (270 aa).

79–81 (IES) is a substrate binding site. Position 81–82 (81–82 (SK)) interacts with NADPH. Catalysis depends on C177, which acts as the Thioimide intermediate. The Proton donor role is filled by D184. Residue 216 to 217 (HE) coordinates substrate. An NADPH-binding site is contributed by 245–246 (RG).

The protein belongs to the GTP cyclohydrolase I family. QueF type 2 subfamily. As to quaternary structure, homodimer.

It localises to the cytoplasm. It catalyses the reaction 7-aminomethyl-7-carbaguanine + 2 NADP(+) = 7-cyano-7-deazaguanine + 2 NADPH + 3 H(+). Its pathway is tRNA modification; tRNA-queuosine biosynthesis. In terms of biological role, catalyzes the NADPH-dependent reduction of 7-cyano-7-deazaguanine (preQ0) to 7-aminomethyl-7-deazaguanine (preQ1). This Acinetobacter baumannii (strain ATCC 17978 / DSM 105126 / CIP 53.77 / LMG 1025 / NCDC KC755 / 5377) protein is NADPH-dependent 7-cyano-7-deazaguanine reductase.